Consider the following 1048-residue polypeptide: Copper-dependent transcription factor 1 (1048 aa).

Residues M1 to S40 constitute a DNA-binding region (copper-fist). The Zn(2+) site is built by C11, C14, C23, and H25. The segment covering A85 to A99 has biased composition (low complexity). Disordered regions lie at residues A85–P117 and H178–V273. Polar residues predominate over residues T211–E222. Positions C348–H362 match the CRM-I motif. A CRM-II motif is present at residues C455–C482. Disordered stretches follow at residues S506 to S702 and G835 to P876. Composition is skewed to polar residues over residues Q527–S536, P550–T565, G629–R645, S664–I682, and A692–S702. The span at G835–T845 shows a compositional bias: low complexity. The span at N846–T868 shows a compositional bias: polar residues.

It is found in the nucleus. The protein localises to the cytoplasm. Its subcellular location is the cell cortex. Transcription factor that regulates copper acquisition and homeostasis, and which plays a central role in fungal pathogenesis during neurologic infection. The transcriptional regulation exerted by CUF1 is intrinsically complex since it acts as a dual sensor of copper levels, responsible for expression of a set of copper-specific copper transporters, CTR1 and CTR4, at low copper concentrations, and 2 metallothioneins, CMT1 and CMT2, at high copper concentrations. Positively regulates the expression of the copper acquisition factor BIM1 under copper-limiting conditions. Also positively regulates the expression of super oxide dismutase SOD2 isoform 2 during oxidative stress and copper-limiting conditions. Negatively regulates the expression of super oxide dismutase SOD1 during copper-limiting conditions. Also regulates ATM1, an ABC transporter with functions in the iron-sulfur clusters (ISC) export machinery, during copper stress. Another target of CUF1 is the gene encoding the laccase LAC1. Binds promoters of target genes at Cu-responsive elements (CuREs) that contain a variable A/T rich 5' region followed by the core consensus sequence 5'-G(G/C)CTC(A/G)-3'. Negatively regulates capsule biosynthesis, probably via modulating iron acquisition through the high-affinity iron uptake pathway. In Cryptococcus neoformans var. grubii serotype A (strain H99 / ATCC 208821 / CBS 10515 / FGSC 9487) (Filobasidiella neoformans var. grubii), this protein is Copper-dependent transcription factor 1.